We begin with the raw amino-acid sequence, 426 residues long: Glutamate-1-semialdehyde 2,1-aminomutase (426 aa).

K264 carries the N6-(pyridoxal phosphate)lysine modification.

It belongs to the class-III pyridoxal-phosphate-dependent aminotransferase family. HemL subfamily. The cofactor is pyridoxal 5'-phosphate.

The protein localises to the cytoplasm. The catalysed reaction is (S)-4-amino-5-oxopentanoate = 5-aminolevulinate. The protein operates within porphyrin-containing compound metabolism; protoporphyrin-IX biosynthesis; 5-aminolevulinate from L-glutamyl-tRNA(Glu): step 2/2. The sequence is that of Glutamate-1-semialdehyde 2,1-aminomutase from Methanocella arvoryzae (strain DSM 22066 / NBRC 105507 / MRE50).